The following is a 254-amino-acid chain: 5'/3'-nucleotidase SurE (254 aa).

Aspartate 9, aspartate 10, serine 40, and asparagine 93 together coordinate a divalent metal cation.

It belongs to the SurE nucleotidase family. The cofactor is a divalent metal cation.

It localises to the cytoplasm. The catalysed reaction is a ribonucleoside 5'-phosphate + H2O = a ribonucleoside + phosphate. The enzyme catalyses a ribonucleoside 3'-phosphate + H2O = a ribonucleoside + phosphate. It carries out the reaction [phosphate](n) + H2O = [phosphate](n-1) + phosphate + H(+). In terms of biological role, nucleotidase with a broad substrate specificity as it can dephosphorylate various ribo- and deoxyribonucleoside 5'-monophosphates and ribonucleoside 3'-monophosphates with highest affinity to 3'-AMP. Also hydrolyzes polyphosphate (exopolyphosphatase activity) with the preference for short-chain-length substrates (P20-25). Might be involved in the regulation of dNTP and NTP pools, and in the turnover of 3'-mononucleotides produced by numerous intracellular RNases (T1, T2, and F) during the degradation of various RNAs. The polypeptide is 5'/3'-nucleotidase SurE (Yersinia pestis bv. Antiqua (strain Antiqua)).